Consider the following 86-residue polypeptide: Large ribosomal subunit protein bL27 (86 aa).

The span at 1-10 shows a compositional bias: gly residues; sequence MAQKKGGGST. Positions 1–20 are disordered; that stretch reads MAQKKGGGSTRNGRDSESKR.

Belongs to the bacterial ribosomal protein bL27 family.

This is Large ribosomal subunit protein bL27 from Polynucleobacter necessarius subsp. necessarius (strain STIR1).